The chain runs to 176 residues: Flavodoxin (176 aa).

A Flavodoxin-like domain is found at 4–165 (IGIFFGSDTG…RVEKWVKQVA (162 aa)).

It belongs to the flavodoxin family. The cofactor is FMN.

Low-potential electron donor to a number of redox enzymes. The protein is Flavodoxin (fldA) of Klebsiella pneumoniae.